A 173-amino-acid chain; its full sequence is Zinc resistance-associated protein homolog (173 aa).

A signal peptide spans 1-28 (MNSKRIALGIIALATVVSLGTAANNAFA).

This sequence belongs to the ZraP family.

This is Zinc resistance-associated protein homolog from Nitratidesulfovibrio vulgaris (strain ATCC 29579 / DSM 644 / CCUG 34227 / NCIMB 8303 / VKM B-1760 / Hildenborough) (Desulfovibrio vulgaris).